We begin with the raw amino-acid sequence, 313 residues long: MALKRKDFLGLYNVEADEINEILDTAQAMKEIFTRTVKKVPTLRGKTIINLFFEPSTRTKSSFDIAAKRLSADVMSISKSSSSVAKGETLLDTARTLEVMGADVVVVRHSAPGAARFLAENLSASVLNAGDGAHAHPTQALLDMYTIKEKMGKIEGLNVLIIGDIAHSRVARSNIWGLTKLGARVRVVGPGTLIPRDIEEMGVEVYRDLDEALEGVDVVNILRIQLERQQKGLFPSIREYRHFYGMNEVRLRKLEDRALVMHPGPMNRGIEIESIVADGEQSVITEQVTNGVAIRMALLYLLAGREINDEDLA.

Positions 58 and 59 each coordinate carbamoyl phosphate. Lysine 86 provides a ligand contact to L-aspartate. Positions 108, 136, and 139 each coordinate carbamoyl phosphate. Positions 169 and 223 each coordinate L-aspartate. Residues glycine 264 and proline 265 each coordinate carbamoyl phosphate.

It belongs to the aspartate/ornithine carbamoyltransferase superfamily. ATCase family. Heterododecamer (2C3:3R2) of six catalytic PyrB chains organized as two trimers (C3), and six regulatory PyrI chains organized as three dimers (R2).

The enzyme catalyses carbamoyl phosphate + L-aspartate = N-carbamoyl-L-aspartate + phosphate + H(+). It functions in the pathway pyrimidine metabolism; UMP biosynthesis via de novo pathway; (S)-dihydroorotate from bicarbonate: step 2/3. Catalyzes the condensation of carbamoyl phosphate and aspartate to form carbamoyl aspartate and inorganic phosphate, the committed step in the de novo pyrimidine nucleotide biosynthesis pathway. The sequence is that of Aspartate carbamoyltransferase catalytic subunit from Halothermothrix orenii (strain H 168 / OCM 544 / DSM 9562).